The primary structure comprises 266 residues: Putative carbamate hydrolase RutD (266 aa).

The protein belongs to the AB hydrolase superfamily. Hydrolase RutD family.

It catalyses the reaction carbamate + 2 H(+) = NH4(+) + CO2. Functionally, involved in pyrimidine catabolism. May facilitate the hydrolysis of carbamate, a reaction that can also occur spontaneously. This Escherichia coli O111:H- (strain 11128 / EHEC) protein is Putative carbamate hydrolase RutD.